The following is a 336-amino-acid chain: F420-dependent glucose-6-phosphate dehydrogenase (336 aa).

Asp-40 serves as a coordination point for coenzyme F420-(gamma-Glu)n. The Proton donor role is filled by His-41. Coenzyme F420-(gamma-Glu)n contacts are provided by residues Thr-77 and Thr-108–Gly-109. The active-site Proton acceptor is the Glu-110. Coenzyme F420-(gamma-Glu)n contacts are provided by residues Asn-113, Ser-176 to Gly-177, and Ala-179 to Ala-180. Substrate contacts are provided by Thr-194, Lys-197, Lys-258, and Arg-282.

It belongs to the F420-dependent glucose-6-phosphate dehydrogenase family. In terms of assembly, homodimer.

It catalyses the reaction oxidized coenzyme F420-(gamma-L-Glu)(n) + D-glucose 6-phosphate + H(+) = 6-phospho-D-glucono-1,5-lactone + reduced coenzyme F420-(gamma-L-Glu)(n). Its function is as follows. Catalyzes the coenzyme F420-dependent oxidation of glucose 6-phosphate (G6P) to 6-phosphogluconolactone. This is F420-dependent glucose-6-phosphate dehydrogenase from Microbacterium testaceum (strain StLB037).